The primary structure comprises 1020 residues: Calcium-transporting ATPase 10, plasma membrane-type (1020 aa).

At 1–175 (MESYLEENFG…FVWEALQDTT (175 aa)) the chain is on the cytoplasmic side. Positions 21-32 (ALRRWRKLCGVV) are interaction with calmodulin. The next 2 membrane-spanning stretches (helical) occupy residues 176-196 (LIIL…MEGW) and 199-219 (GAHD…VTAT). Over 220–263 (SDYRQSLQFKDLDKEKKKIQVQVTRNGFRQRLSIYDLLPGDVVH) the chain is Cytoplasmic. The next 2 helical transmembrane spans lie at 264–284 (LAIG…SLLI) and 352–372 (GVAT…FIVL). Topologically, residues 373–400 (SQGLISKKYHEGLLLSWSGDDALEMLEH) are cytoplasmic. A helical membrane pass occupies residues 401–421 (FAIAVTIVVVAVPEGLPLAVT). Asp456 acts as the 4-aspartylphosphate intermediate in catalysis. Positions 758 and 762 each coordinate Mg(2+). A helical transmembrane segment spans residues 843–863 (LTAVQLLWVNMIMDTLGALAL). Residues 864-887 (ATEPPNDDLMKREPVGRTGKFITN) lie on the Cytoplasmic side of the membrane. The next 2 membrane-spanning stretches (helical) occupy residues 888 to 907 (VMWR…MWYL) and 924 to 944 (VVLN…NEIS). The Cytoplasmic portion of the chain corresponds to 945-961 (SREMEKINVLRGILKNY). Helical transmembrane passes span 962–982 (VFLG…QFLG) and 995–1015 (WIAS…IKLL). Over 1016–1020 (PVGSS) the chain is Cytoplasmic.

The protein belongs to the cation transport ATPase (P-type) (TC 3.A.3) family. Type IIB subfamily.

The protein localises to the membrane. It carries out the reaction Ca(2+)(in) + ATP + H2O = Ca(2+)(out) + ADP + phosphate + H(+). With respect to regulation, activated by calmodulin. This magnesium-dependent enzyme catalyzes the hydrolysis of ATP coupled with the translocation of calcium from the cytosol out of the cell, into the endoplasmic reticulum, or into organelles. The polypeptide is Calcium-transporting ATPase 10, plasma membrane-type (Oryza sativa subsp. japonica (Rice)).